Here is a 77-residue protein sequence, read N- to C-terminus: Delta-conotoxin GmVIA (77 aa).

An N-terminal signal peptide occupies residues Met-1–Ala-22. Positions Asp-23–Arg-48 are excised as a propeptide. Disulfide bonds link Cys-52–Cys-67, Cys-59–Cys-72, and Cys-66–Cys-76.

The protein belongs to the conotoxin O1 superfamily. In terms of tissue distribution, expressed by the venom duct.

It is found in the secreted. In terms of biological role, delta-conotoxins bind to site 6 of voltage-gated sodium channels (Nav) and inhibit the inactivation process. This toxin shows weak activity on rNav1.2/SCN2A (EC(50)=2.5 uM) and rNav1.4/SCN4A (EC(50)=4.8 uM). In vivo, injection of this peptide in the head region of garden snail induces retraction of the head and body into shell. This is followed by secretion of viscous green slime and a convulsive undulation into and out of the shell. No apparent biological activity was observed when a much greater dose of peptide was injected intraperitoneally into mice. The sequence is that of Delta-conotoxin GmVIA from Conus gloriamaris (Glory-of-the-Sea cone).